Consider the following 291-residue polypeptide: Pyridoxal 5'-phosphate synthase subunit PdxS (291 aa).

Asp-23 contacts D-ribose 5-phosphate. Lys-80 acts as the Schiff-base intermediate with D-ribose 5-phosphate in catalysis. Gly-152 is a binding site for D-ribose 5-phosphate. Residue Arg-164 participates in D-glyceraldehyde 3-phosphate binding. D-ribose 5-phosphate contacts are provided by residues Gly-213 and 234-235; that span reads GS.

It belongs to the PdxS/SNZ family. In terms of assembly, in the presence of PdxT, forms a dodecamer of heterodimers.

It catalyses the reaction aldehydo-D-ribose 5-phosphate + D-glyceraldehyde 3-phosphate + L-glutamine = pyridoxal 5'-phosphate + L-glutamate + phosphate + 3 H2O + H(+). Its pathway is cofactor biosynthesis; pyridoxal 5'-phosphate biosynthesis. Catalyzes the formation of pyridoxal 5'-phosphate from ribose 5-phosphate (RBP), glyceraldehyde 3-phosphate (G3P) and ammonia. The ammonia is provided by the PdxT subunit. Can also use ribulose 5-phosphate and dihydroxyacetone phosphate as substrates, resulting from enzyme-catalyzed isomerization of RBP and G3P, respectively. This chain is Pyridoxal 5'-phosphate synthase subunit PdxS, found in Bifidobacterium adolescentis (strain ATCC 15703 / DSM 20083 / NCTC 11814 / E194a).